Here is a 660-residue protein sequence, read N- to C-terminus: Bifunctional polymyxin resistance protein ArnA (660 aa).

The segment at 1-304 (MKAVVFAYHD…TLGLVAGAII (304 aa)) is formyltransferase ArnAFT. Histidine 104 functions as the Proton donor; for formyltransferase activity in the catalytic mechanism. (6R)-10-formyltetrahydrofolate contacts are provided by residues arginine 114 and 136 to 140 (VSRAD). A dehydrogenase ArnADH region spans residues 314–660 (RRTRVLILGV…KTVELTEPQA (347 aa)). Residues aspartate 347 and 368 to 369 (DI) contribute to the NAD(+) site. UDP-alpha-D-glucuronate-binding positions include alanine 393, tyrosine 398, and 432 to 433 (TS). The Proton acceptor; for decarboxylase activity role is filled by glutamate 434. UDP-alpha-D-glucuronate-binding positions include arginine 460, asparagine 492, 526–535 (KLIDGGRQKR), and tyrosine 613. The active-site Proton donor; for decarboxylase activity is the arginine 619.

It in the N-terminal section; belongs to the Fmt family. UDP-L-Ara4N formyltransferase subfamily. In the C-terminal section; belongs to the NAD(P)-dependent epimerase/dehydratase family. UDP-glucuronic acid decarboxylase subfamily. Homohexamer, formed by a dimer of trimers.

It carries out the reaction UDP-alpha-D-glucuronate + NAD(+) = UDP-beta-L-threo-pentopyranos-4-ulose + CO2 + NADH. The enzyme catalyses UDP-4-amino-4-deoxy-beta-L-arabinose + (6R)-10-formyltetrahydrofolate = UDP-4-deoxy-4-formamido-beta-L-arabinose + (6S)-5,6,7,8-tetrahydrofolate + H(+). It participates in nucleotide-sugar biosynthesis; UDP-4-deoxy-4-formamido-beta-L-arabinose biosynthesis; UDP-4-deoxy-4-formamido-beta-L-arabinose from UDP-alpha-D-glucuronate: step 1/3. Its pathway is nucleotide-sugar biosynthesis; UDP-4-deoxy-4-formamido-beta-L-arabinose biosynthesis; UDP-4-deoxy-4-formamido-beta-L-arabinose from UDP-alpha-D-glucuronate: step 3/3. It functions in the pathway bacterial outer membrane biogenesis; lipopolysaccharide biosynthesis. In terms of biological role, bifunctional enzyme that catalyzes the oxidative decarboxylation of UDP-glucuronic acid (UDP-GlcUA) to UDP-4-keto-arabinose (UDP-Ara4O) and the addition of a formyl group to UDP-4-amino-4-deoxy-L-arabinose (UDP-L-Ara4N) to form UDP-L-4-formamido-arabinose (UDP-L-Ara4FN). The modified arabinose is attached to lipid A and is required for resistance to polymyxin and cationic antimicrobial peptides. In Enterobacter sp. (strain 638), this protein is Bifunctional polymyxin resistance protein ArnA.